The following is a 281-amino-acid chain: Cardosin-F (281 aa).

The region spanning 18–278 (YYGEIGIGTP…DYGNLLVGFA (261 aa)) is the Peptidase A1 domain. Asp36 is an active-site residue. A disulfide bond links Cys181 and Cys185. Asp190 is a catalytic residue. Asn213 is a glycosylation site (N-linked (GlcNAc...) asparagine).

This sequence belongs to the peptidase A1 family. As to quaternary structure, heterodimer of a light chain and a heavy chain. An intermediate form is produced first, and undergoes proteolytic processing to remove the internal plant-specific insert (PSI) and the propeptide. N-glycosylated. As to expression, pistils.

Its subcellular location is the microsome membrane. It localises to the protein storage vacuole. The protein localises to the secreted. It is found in the cell wall. The protein resides in the extracellular space. Its subcellular location is the extracellular matrix. Its activity is regulated as follows. Inhibited by pepstatin. Its function is as follows. Aspartic protease with a high preference for bonds between hydrophobic residues. The sequence is that of Cardosin-F from Cynara cardunculus (Cardoon).